A 425-amino-acid polypeptide reads, in one-letter code: UDP-N-acetylglucosamine 1-carboxyvinyltransferase (425 aa).

Position 22 to 23 (22 to 23) interacts with phosphoenolpyruvate; that stretch reads KN. UDP-N-acetyl-alpha-D-glucosamine is bound at residue arginine 93. The active-site Proton donor is cysteine 117. Cysteine 117 bears the 2-(S-cysteinyl)pyruvic acid O-phosphothioketal mark. UDP-N-acetyl-alpha-D-glucosamine-binding positions include 122–126, aspartate 307, and valine 329; that span reads RPIDL.

This sequence belongs to the EPSP synthase family. MurA subfamily.

Its subcellular location is the cytoplasm. It catalyses the reaction phosphoenolpyruvate + UDP-N-acetyl-alpha-D-glucosamine = UDP-N-acetyl-3-O-(1-carboxyvinyl)-alpha-D-glucosamine + phosphate. The protein operates within cell wall biogenesis; peptidoglycan biosynthesis. Its function is as follows. Cell wall formation. Adds enolpyruvyl to UDP-N-acetylglucosamine. The chain is UDP-N-acetylglucosamine 1-carboxyvinyltransferase from Prosthecochloris aestuarii (strain DSM 271 / SK 413).